A 406-amino-acid polypeptide reads, in one-letter code: Succinylornithine transaminase (406 aa).

N6-(pyridoxal phosphate)lysine is present on Lys-252.

Belongs to the class-III pyridoxal-phosphate-dependent aminotransferase family. AstC subfamily. The cofactor is pyridoxal 5'-phosphate.

The enzyme catalyses N(2)-succinyl-L-ornithine + 2-oxoglutarate = N-succinyl-L-glutamate 5-semialdehyde + L-glutamate. It participates in amino-acid degradation; L-arginine degradation via AST pathway; L-glutamate and succinate from L-arginine: step 3/5. Its function is as follows. Catalyzes the transamination of N(2)-succinylornithine and alpha-ketoglutarate into N(2)-succinylglutamate semialdehyde and glutamate. Can also act as an acetylornithine aminotransferase. The polypeptide is Succinylornithine transaminase (Shigella boydii serotype 18 (strain CDC 3083-94 / BS512)).